The sequence spans 404 residues: Argininosuccinate synthase (404 aa).

Residues 12-20 (AYSGGLDTS) and A39 each bind ATP. L-citrulline contacts are provided by Y91 and S96. G121 serves as a coordination point for ATP. Positions 123, 127, and 128 each coordinate L-aspartate. N127 is a binding site for L-citrulline. L-citrulline contacts are provided by R131, S180, S189, E265, and Y277.

This sequence belongs to the argininosuccinate synthase family. Type 1 subfamily. In terms of assembly, homotetramer.

It is found in the cytoplasm. It catalyses the reaction L-citrulline + L-aspartate + ATP = 2-(N(omega)-L-arginino)succinate + AMP + diphosphate + H(+). It functions in the pathway amino-acid biosynthesis; L-arginine biosynthesis; L-arginine from L-ornithine and carbamoyl phosphate: step 2/3. The chain is Argininosuccinate synthase from Vibrio parahaemolyticus serotype O3:K6 (strain RIMD 2210633).